Here is a 73-residue protein sequence, read N- to C-terminus: MIEVVCNDRLGKKVRVKCNQEDTIGDLKKLIAAQTGTRWEKIVLKKWYTIFKNHVSLGDYEIHDGMNLELYYL.

Residues 1–73 (MIEVVCNDRL…DGMNLELYYL (73 aa)) enclose the Ubiquitin-like domain.

The protein resides in the cytoplasm. The polypeptide is Ubiquitin-like protein 5 (ubl5) (Danio rerio (Zebrafish)).